A 926-amino-acid polypeptide reads, in one-letter code: Beta-mannosidase A (926 aa).

An N-terminal signal peptide occupies residues 1-21; the sequence is MHVKAETVLALLTPAPPSVVG. N-linked (GlcNAc...) asparagine glycans are attached at residues Asn-40, Asn-242, Asn-277, Asn-311, and Asn-342. Glu-474 acts as the Proton donor in catalysis. Asn-532, Asn-603, Asn-626, Asn-653, Asn-733, Asn-756, Asn-785, Asn-793, Asn-819, and Asn-905 each carry an N-linked (GlcNAc...) asparagine glycan.

It belongs to the glycosyl hydrolase 2 family. Beta-mannosidase A subfamily. As to quaternary structure, homodimer.

It localises to the secreted. The enzyme catalyses Hydrolysis of terminal, non-reducing beta-D-mannose residues in beta-D-mannosides.. Its pathway is glycan metabolism; N-glycan degradation. Functionally, exoglycosidase that cleaves the single beta-linked mannose residue from the non-reducing end of beta-mannosidic oligosaccharides of various complexity and length. Involved in the degradation of polymeric mannan and galactomannan. This Aspergillus fumigatus (strain CBS 144.89 / FGSC A1163 / CEA10) (Neosartorya fumigata) protein is Beta-mannosidase A (mndA).